The sequence spans 421 residues: Gamma-glutamyl phosphate reductase (421 aa).

This sequence belongs to the gamma-glutamyl phosphate reductase family.

The protein resides in the cytoplasm. The enzyme catalyses L-glutamate 5-semialdehyde + phosphate + NADP(+) = L-glutamyl 5-phosphate + NADPH + H(+). It participates in amino-acid biosynthesis; L-proline biosynthesis; L-glutamate 5-semialdehyde from L-glutamate: step 2/2. In terms of biological role, catalyzes the NADPH-dependent reduction of L-glutamate 5-phosphate into L-glutamate 5-semialdehyde and phosphate. The product spontaneously undergoes cyclization to form 1-pyrroline-5-carboxylate. The protein is Gamma-glutamyl phosphate reductase of Acinetobacter baylyi (strain ATCC 33305 / BD413 / ADP1).